The primary structure comprises 510 residues: MCVDCKKRVRTRVAPSPTGDPHVGTAYIALFNIAFAHVNDGDFILRIEDTDRNRYTEGSEQMIFDALKWLDLDYSEGPDVGGDYGPYRQSERFDLYGKYAKELVEKGGAYYCFCDHERLENLRERQKAMGLPPGYDGHCRSLSKEEIEEKLKAGVPYVIRLKMPYEGETVIHDRLRGDVVFENSKIDDQVLLKADGYPTYHLANIVDDHLMGITHVIRAEEWIPSTPKHIQLYKAFGWEAPEFIHMPLLRNDDRSKISKRKNPVSLIWYKEEGYLKEGLVNFLGLMGYSYGDGQEIFTLQEFKDNFNIDKVTLGGPVFDLVKLGWVNNQHMKMKDLGELTRLTIPFFVNEGYLTNENVSEKEFETLKKVVGIEREGAKTLQELAKNSKFFFVDEFSLPELREDMDKKERKSVERLLNSLKDEIGLKSIKLFIEKLEKWNGNEFTAEQAKDLLHSLLDDLQEGPGKIFMPIRAVLTGESKGADLYNILYVIGKERALKRIKNIVKKYNIGI.

A 'HIGH' region motif is present at residues 15 to 25; it reads PSPTGDPHVGT. The 'KMSKS' region motif lies at 256-260; that stretch reads KISKR. ATP is bound at residue K259.

Belongs to the class-I aminoacyl-tRNA synthetase family. Glutamate--tRNA ligase type 1 subfamily. Monomer.

The protein localises to the cytoplasm. It catalyses the reaction tRNA(Glu) + L-glutamate + ATP = L-glutamyl-tRNA(Glu) + AMP + diphosphate. In terms of biological role, catalyzes the attachment of glutamate to tRNA(Glu) in a two-step reaction: glutamate is first activated by ATP to form Glu-AMP and then transferred to the acceptor end of tRNA(Glu). This is Glutamate--tRNA ligase from Fusobacterium nucleatum subsp. nucleatum (strain ATCC 25586 / DSM 15643 / BCRC 10681 / CIP 101130 / JCM 8532 / KCTC 2640 / LMG 13131 / VPI 4355).